The primary structure comprises 452 residues: GTPase Der (452 aa).

EngA-type G domains follow at residues 4-169 (PIVA…PSPD) and 177-352 (INVS…EEHR). GTP is bound by residues 10–17 (GRPNVGKS), 57–61 (DTGGL), 120–123 (NKCE), 183–190 (GRPNVGKS), 230–234 (DTAGI), and 295–298 (NKWD). Residues 353–438 (RRVNTSVVNE…PIRLLWRGKK (86 aa)) enclose the KH-like domain.

This sequence belongs to the TRAFAC class TrmE-Era-EngA-EngB-Septin-like GTPase superfamily. EngA (Der) GTPase family. In terms of assembly, associates with the 50S ribosomal subunit.

In terms of biological role, GTPase that plays an essential role in the late steps of ribosome biogenesis. The chain is GTPase Der from Crocosphaera subtropica (strain ATCC 51142 / BH68) (Cyanothece sp. (strain ATCC 51142)).